A 69-amino-acid polypeptide reads, in one-letter code: Large ribosomal subunit protein uL29 (69 aa).

Belongs to the universal ribosomal protein uL29 family.

In Clostridium perfringens (strain ATCC 13124 / DSM 756 / JCM 1290 / NCIMB 6125 / NCTC 8237 / Type A), this protein is Large ribosomal subunit protein uL29.